We begin with the raw amino-acid sequence, 664 residues long: Chaperone protein DnaK (664 aa).

T201 bears the Phosphothreonine; by autocatalysis mark. A compositionally biased stretch (basic and acidic residues) spans 574-592; the sequence is LKEDASTEKIKEASEELSR. A disordered region spans residues 574 to 664; it reads LKEDASTEKI…DVEIVDKPND (91 aa). A compositionally biased stretch (low complexity) spans 600–617; it reads AMQSQSASAAPSSAANAQ. Residues 639–649 are compositionally biased toward polar residues; the sequence is GNSTSASSNNE.

Belongs to the heat shock protein 70 family.

Functionally, acts as a chaperone. This is Chaperone protein DnaK from Chlamydia felis (strain Fe/C-56) (Chlamydophila felis).